The sequence spans 303 residues: Taste receptor type 2 member 2 (303 aa).

The Extracellular segment spans residues 1–10 (MALSFSAILH). The chain crosses the membrane as a helical span at residues 11-31 (IIMMSAEFFTGITVNGFLIIV). Residues 32-56 (NCNELIKHRKLMPIQILLMCIGMSR) lie on the Cytoplasmic side of the membrane. A helical transmembrane segment spans residues 57 to 77 (FGLQMVLMVQSFFSVFFPLLY). Topologically, residues 78 to 79 (VK) are extracellular. Residues 80–100 (IIYGAAMMFLWMFFSSISLWF) form a helical membrane-spanning segment. Over 101-102 (AT) the chain is Cytoplasmic. Residues 103–123 (CLSVFYCLKISGFTQSCFLWL) traverse the membrane as a helical segment. Over 124–129 (KFRIPK) the chain is Extracellular. A helical membrane pass occupies residues 130–150 (LIPWLLLGSVLASVSIASVCI). Over 151 to 185 (EVDYAKNVEEDALRNTTLKKSKTKIKKISEVLLVN) the chain is Cytoplasmic. Residues 186-206 (LALIFPLAIFVMCTSMLLISL) traverse the membrane as a helical segment. The Extracellular portion of the chain corresponds to 207 to 234 (YKHTHRMQHGSHGFRNANTEAHINALKT). The chain crosses the membrane as a helical span at residues 235 to 255 (VITFFCFFISYFAAFMTNMTF). Topologically, residues 256 to 277 (SLPYRSHQFFMLKDIMAAYPSG) are cytoplasmic.

Belongs to the G-protein coupled receptor T2R family.

The protein localises to the cell membrane. Functionally, bitter taste receptor that detects natural and synthetic bitter compounds. In Homo sapiens (Human), this protein is Taste receptor type 2 member 2.